A 431-amino-acid polypeptide reads, in one-letter code: Serine/threonine-protein kinase Sgk1 (431 aa).

Positions methionine 1–isoleucine 60 are necessary for localization to the mitochondria. The tract at residues proline 66–histidine 92 is disordered. Serine 74 bears the Phosphoserine mark. Serine 78 is modified (phosphoserine; by MAPK7). The segment covering glutamine 81 to proline 91 has biased composition (polar residues). The region spanning phenylalanine 98–phenylalanine 355 is the Protein kinase domain. ATP-binding positions include isoleucine 104 to valine 112 and lysine 127. The Nuclear localization signal motif lies at lysine 131–lysine 141. Aspartate 222 (proton acceptor) is an active-site residue. Threonine 256 is subject to Phosphothreonine; by PDPK1. Positions serine 356–leucine 431 constitute an AGC-kinase C-terminal domain. Threonine 369 bears the Phosphothreonine; by PKA mark. Phosphoserine is present on residues serine 397, serine 401, and serine 422.

The protein belongs to the protein kinase superfamily. AGC Ser/Thr protein kinase family. Homodimer; disulfide-linked. Forms a trimeric complex with FBXW7 and NOTCH1. Interacts with MAPK3/ERK1, MAPK1/ERK2, MAP2K1/MEK1, MAP2K2/MEK2, NEDD4, NEDD4L, MAPT/TAU, MAPK7, CREB1, SLC9A3R2/NHERF2 and KCNJ1/ROMK1. Associates with the mammalian target of rapamycin complex 2 (mTORC2) via an interaction with MAPKAP1/SIN1. Post-translationally, regulated by phosphorylation. Activated by phosphorylation on Ser-422 by mTORC2, transforming it into a substrate for PDPK1 which phosphorylates it on Thr-256. Phosphorylation on Ser-397 and Ser-401 are also essential for its activity. Phosphorylation on Ser-78 by MAPK7 is required for growth factor-induced cell cycle progression. In terms of processing, ubiquitinated by NEDD4L; which promotes proteasomal degradation. Ubiquitinated by SYVN1 at the endoplasmic reticulum; which promotes rapid proteasomal degradation and maintains a high turnover rate in resting cells.

Its subcellular location is the cytoplasm. The protein localises to the nucleus. It is found in the endoplasmic reticulum membrane. It localises to the cell membrane. The protein resides in the mitochondrion. It catalyses the reaction L-seryl-[protein] + ATP = O-phospho-L-seryl-[protein] + ADP + H(+). The enzyme catalyses L-threonyl-[protein] + ATP = O-phospho-L-threonyl-[protein] + ADP + H(+). With respect to regulation, two specific sites, one in the kinase domain (Thr-256) and the other in the C-terminal regulatory region (Ser-422), need to be phosphorylated for its full activation. Phosphorylation at Ser-397 and Ser-401 are also essential for its activity. Activated by WNK1, WNK2, WNK3 and WNK4; which promote phosphorylation by mTORC2. Its function is as follows. Serine/threonine-protein kinase which is involved in the regulation of a wide variety of ion channels, membrane transporters, cellular enzymes, transcription factors, neuronal excitability, cell growth, proliferation, survival, migration and apoptosis. Plays an important role in cellular stress response. Contributes to regulation of renal Na(+) retention, renal K(+) elimination, salt appetite, gastric acid secretion, intestinal Na(+)/H(+) exchange and nutrient transport, insulin-dependent salt sensitivity of blood pressure, salt sensitivity of peripheral glucose uptake, cardiac repolarization and memory consolidation. Up-regulates Na(+) channels: SCNN1A/ENAC, SCN5A and ASIC1/ACCN2, K(+) channels: KCNJ1/ROMK1, KCNA1-5, KCNQ1-5 and KCNE1, epithelial Ca(2+) channels: TRPV5 and TRPV6, chloride channels: BSND, CLCN2 and CFTR, glutamate transporters: SLC1A3/EAAT1, SLC1A2 /EAAT2, SLC1A1/EAAT3, SLC1A6/EAAT4 and SLC1A7/EAAT5, amino acid transporters: SLC1A5/ASCT2, SLC38A1/SN1 and SLC6A19, creatine transporter: SLC6A8, Na(+)/dicarboxylate cotransporter: SLC13A2/NADC1, Na(+)-dependent phosphate cotransporter: SLC34A2/NAPI-2B, glutamate receptor: GRIK2/GLUR6. Up-regulates carriers: SLC9A3/NHE3, SLC12A1/NKCC2, SLC12A3/NCC, SLC5A3/SMIT, SLC2A1/GLUT1, SLC5A1/SGLT1 and SLC15A2/PEPT2. Regulates enzymes: GSK3A/B, PMM2 and Na(+)/K(+) ATPase, and transcription factors: CTNNB1 and nuclear factor NF-kappa-B. Stimulates sodium transport into epithelial cells by enhancing the stability and expression of SCNN1A/ENAC. This is achieved by phosphorylating the NEDD4L ubiquitin E3 ligase, promoting its interaction with 14-3-3 proteins, thereby preventing it from binding to SCNN1A/ENAC and targeting it for degradation. Regulates store-operated Ca(+2) entry (SOCE) by stimulating ORAI1 and STIM1. Regulates KCNJ1/ROMK1 directly via its phosphorylation or indirectly via increased interaction with SLC9A3R2/NHERF2. Phosphorylates MDM2 and activates MDM2-dependent ubiquitination of p53/TP53. Phosphorylates MAPT/TAU and mediates microtubule depolymerization and neurite formation in hippocampal neurons. Phosphorylates SLC2A4/GLUT4 and up-regulates its activity. Phosphorylates APBB1/FE65 and promotes its localization to the nucleus. Phosphorylates MAPK1/ERK2 and activates it by enhancing its interaction with MAP2K1/MEK1 and MAP2K2/MEK2. Phosphorylates FBXW7 and plays an inhibitory role in the NOTCH1 signaling. Phosphorylates FOXO1 resulting in its relocalization from the nucleus to the cytoplasm. Phosphorylates FOXO3, promoting its exit from the nucleus and interference with FOXO3-dependent transcription. Phosphorylates BRAF and MAP3K3/MEKK3 and inhibits their activity. Phosphorylates SLC9A3/NHE3 in response to dexamethasone, resulting in its activation and increased localization at the cell membrane. Phosphorylates CREB1. Necessary for vascular remodeling during angiogenesis. This Oryctolagus cuniculus (Rabbit) protein is Serine/threonine-protein kinase Sgk1 (SGK1).